A 510-amino-acid polypeptide reads, in one-letter code: Maturase K (510 aa).

It belongs to the intron maturase 2 family. MatK subfamily.

Its subcellular location is the plastid. The protein localises to the chloroplast. Its function is as follows. Usually encoded in the trnK tRNA gene intron. Probably assists in splicing its own and other chloroplast group II introns. This is Maturase K from Taxus cuspidata (Japanese yew).